The following is a 287-amino-acid chain: Bifunctional protein FolD (287 aa).

NADP(+) is bound by residues 166–168 and I232; that span reads GAS.

This sequence belongs to the tetrahydrofolate dehydrogenase/cyclohydrolase family. Homodimer.

The enzyme catalyses (6R)-5,10-methylene-5,6,7,8-tetrahydrofolate + NADP(+) = (6R)-5,10-methenyltetrahydrofolate + NADPH. It carries out the reaction (6R)-5,10-methenyltetrahydrofolate + H2O = (6R)-10-formyltetrahydrofolate + H(+). It functions in the pathway one-carbon metabolism; tetrahydrofolate interconversion. Its function is as follows. Catalyzes the oxidation of 5,10-methylenetetrahydrofolate to 5,10-methenyltetrahydrofolate and then the hydrolysis of 5,10-methenyltetrahydrofolate to 10-formyltetrahydrofolate. The polypeptide is Bifunctional protein FolD (Pectobacterium atrosepticum (strain SCRI 1043 / ATCC BAA-672) (Erwinia carotovora subsp. atroseptica)).